The following is a 441-amino-acid chain: Putative cytochrome P450 138 (441 aa).

Heme is bound at residue Cys388.

It belongs to the cytochrome P450 family. It depends on heme as a cofactor.

The chain is Putative cytochrome P450 138 (cyp138) from Mycobacterium bovis (strain ATCC BAA-935 / AF2122/97).